The following is a 75-amino-acid chain: Sec-independent protein translocase protein TatA (75 aa).

Residues 1–21 (MGISIWQLLIVLGIVILLFGT) traverse the membrane as a helical segment. Residues 41 to 75 (SMSDEEEKNAEQQPLEKQNAEQQAQAEDKPKEKQG) form a disordered region. The span at 56-65 (EKQNAEQQAQ) shows a compositional bias: low complexity. Over residues 66–75 (AEDKPKEKQG) the composition is skewed to basic and acidic residues.

The protein belongs to the TatA/E family. As to quaternary structure, the Tat system comprises two distinct complexes: a TatABC complex, containing multiple copies of TatA, TatB and TatC subunits, and a separate TatA complex, containing only TatA subunits. Substrates initially bind to the TatABC complex, which probably triggers association of the separate TatA complex to form the active translocon.

Its subcellular location is the cell inner membrane. Functionally, part of the twin-arginine translocation (Tat) system that transports large folded proteins containing a characteristic twin-arginine motif in their signal peptide across membranes. TatA could form the protein-conducting channel of the Tat system. In Marinobacter nauticus (strain ATCC 700491 / DSM 11845 / VT8) (Marinobacter aquaeolei), this protein is Sec-independent protein translocase protein TatA.